Consider the following 260-residue polypeptide: MPVHLLIVDALNLIRRIHAVQGSPCITACQHALHQLIQNSQPTHAVAVFDDEDRDTSWRHQLLPDYKAGRTPMPDNLKQELPQIKAAFAAAGVASWHSPGNEADDLAATLATKLSSAGHQATIVSTDKGYCQLLAPHIQIRDYFQKRWLDLPFVEQEFGVSPQQLTDYWGLAGISSSKIPGVAGIGPKSAAQLLQQAGSLEALYQQLDGVPEKWRKKLEQHKEMALVSRQIATLRTDLTLNGNLQQLRLPVQSVAQSDPH.

Asp104 contacts Mg(2+). Residues 160–249 enclose the 5'-3' exonuclease domain; it reads VSPQQLTDYW…LNGNLQQLRL (90 aa). K(+)-binding residues include Leu171, Ala172, Pro180, Val182, and Ile185. Residues 184-189 form an interaction with DNA region; it reads GIGPKS.

The protein belongs to the Xni family. It depends on Mg(2+) as a cofactor. The cofactor is K(+).

Has flap endonuclease activity. During DNA replication, flap endonucleases cleave the 5'-overhanging flap structure that is generated by displacement synthesis when DNA polymerase encounters the 5'-end of a downstream Okazaki fragment. The protein is Flap endonuclease Xni of Pectobacterium carotovorum subsp. carotovorum (strain PC1).